The following is a 217-amino-acid chain: Small ribosomal subunit protein uS3c (217 aa).

The region spanning 47–119 (VRTHIKSSSN…KLHIAIEKVA (73 aa)) is the KH type-2 domain.

The protein belongs to the universal ribosomal protein uS3 family. As to quaternary structure, part of the 30S ribosomal subunit.

The protein resides in the plastid. Its subcellular location is the chloroplast. The polypeptide is Small ribosomal subunit protein uS3c (rps3) (Pinus thunbergii (Japanese black pine)).